Here is a 190-residue protein sequence, read N- to C-terminus: Pyridoxal 5'-phosphate synthase subunit PdxT (190 aa).

46-48 (GES) contacts L-glutamine. Cys-78 serves as the catalytic Nucleophile. L-glutamine contacts are provided by residues Arg-105 and 138–139 (IR). Residues His-174 and Glu-176 each act as charge relay system in the active site.

Belongs to the glutaminase PdxT/SNO family. In the presence of PdxS, forms a dodecamer of heterodimers. Only shows activity in the heterodimer.

The catalysed reaction is aldehydo-D-ribose 5-phosphate + D-glyceraldehyde 3-phosphate + L-glutamine = pyridoxal 5'-phosphate + L-glutamate + phosphate + 3 H2O + H(+). The enzyme catalyses L-glutamine + H2O = L-glutamate + NH4(+). The protein operates within cofactor biosynthesis; pyridoxal 5'-phosphate biosynthesis. In terms of biological role, catalyzes the hydrolysis of glutamine to glutamate and ammonia as part of the biosynthesis of pyridoxal 5'-phosphate. The resulting ammonia molecule is channeled to the active site of PdxS. In Bifidobacterium longum (strain NCC 2705), this protein is Pyridoxal 5'-phosphate synthase subunit PdxT.